The sequence spans 39 residues: Potassium channel toxin alpha-KTx 2.8 (39 aa).

Disulfide bonds link Cys-7–Cys-29, Cys-13–Cys-34, and Cys-17–Cys-36.

It belongs to the short scorpion toxin superfamily. Potassium channel inhibitor family. Alpha-KTx 02 subfamily. In terms of tissue distribution, expressed by the venom gland.

It is found in the secreted. Blocks Kv1.3/KCNA3 voltage-gated potassium channels of human T-lymphocytes (Kd=0.71 nM). In Centruroides elegans (Bark scorpion), this protein is Potassium channel toxin alpha-KTx 2.8.